A 1111-amino-acid chain; its full sequence is Serine/threonine-protein kinase Nek10 (1111 aa).

Basic and acidic residues predominate over residues 1–16 (MPDQDTKAKSTEKTAD). Disordered stretches follow at residues 1 to 24 (MPDQDTKAKSTEKTADKQQGTTTR) and 47 to 72 (AINFDSAQNNMTKSEPTIRTGGHRAR). The span at 47–63 (AINFDSAQNNMTKSEPT) shows a compositional bias: polar residues. Residues 481–514 (YKDLVSQLNLLLEDELKQIAENIESINQKKAPLK) adopt a coiled-coil conformation. The region spanning 519–791 (YAVLDHLGSG…MISDVMMKYL (273 aa)) is the Protein kinase domain. ATP is bound by residues 525 to 533 (LGSGAFGCV) and Lys548. Catalysis depends on Asp655, which acts as the Proton acceptor.

The protein belongs to the protein kinase superfamily. NEK Ser/Thr protein kinase family. NIMA subfamily. Interacts with RAF1 and MAP2K1; the interaction is direct with RAF1 and required for ERK1/2-signaling pathway activation in response to UV irradiation. Mg(2+) is required as a cofactor. Expressed in the mammary gland, lung, spleen, and kidney.

It catalyses the reaction L-seryl-[protein] + ATP = O-phospho-L-seryl-[protein] + ADP + H(+). It carries out the reaction L-threonyl-[protein] + ATP = O-phospho-L-threonyl-[protein] + ADP + H(+). Plays a role in the cellular response to UV irradiation. Mediates G2/M cell cycle arrest, MEK autoactivation and ERK1/2-signaling pathway activation in response to UV irradiation. In ciliated cells, it is involved in the regulation of mucociliary transport. The polypeptide is Serine/threonine-protein kinase Nek10 (Mus musculus (Mouse)).